The primary structure comprises 375 residues: 4-hydroxy-3-methylbut-2-en-1-yl diphosphate synthase (flavodoxin) (375 aa).

Residues cysteine 270, cysteine 273, cysteine 305, and glutamate 312 each contribute to the [4Fe-4S] cluster site.

This sequence belongs to the IspG family. It depends on [4Fe-4S] cluster as a cofactor.

The catalysed reaction is (2E)-4-hydroxy-3-methylbut-2-enyl diphosphate + oxidized [flavodoxin] + H2O + 2 H(+) = 2-C-methyl-D-erythritol 2,4-cyclic diphosphate + reduced [flavodoxin]. Its pathway is isoprenoid biosynthesis; isopentenyl diphosphate biosynthesis via DXP pathway; isopentenyl diphosphate from 1-deoxy-D-xylulose 5-phosphate: step 5/6. Converts 2C-methyl-D-erythritol 2,4-cyclodiphosphate (ME-2,4cPP) into 1-hydroxy-2-methyl-2-(E)-butenyl 4-diphosphate. This chain is 4-hydroxy-3-methylbut-2-en-1-yl diphosphate synthase (flavodoxin), found in Yersinia pseudotuberculosis serotype IB (strain PB1/+).